A 356-amino-acid polypeptide reads, in one-letter code: Caspase activity and apoptosis inhibitor 1 (356 aa).

Residues 1–14 (MTGKKSSREKRRKR) are compositionally biased toward basic residues. Disordered stretches follow at residues 1–24 (MTGK…ASLA) and 54–80 (VAGG…GSLQ). At Ser68 the chain carries Phosphoserine. The residue at position 69 (Thr69) is a Phosphothreonine. Lys84 is covalently cross-linked (Glycyl lysine isopeptide (Lys-Gly) (interchain with G-Cter in SUMO2)). Residues Ser100 and Ser183 each carry the phosphoserine modification. The segment at 208–234 (DSTSSLRENKQPEVLESKQGKGEDSDV) is disordered. Positions 214-231 (RENKQPEVLESKQGKGED) are enriched in basic and acidic residues. Positions 276-306 (ENTVQSEAGQIDDLERDIEKSVNEILGLAES) form a coiled coil. Ser307 carries the phosphoserine modification.

Anti-apoptotic protein that modulates a caspase-10 dependent mitochondrial caspase-3/9 feedback amplification loop. The chain is Caspase activity and apoptosis inhibitor 1 (Caap1) from Mus musculus (Mouse).